The following is a 226-amino-acid chain: Adenylate kinase (226 aa).

An ATP-binding site is contributed by 11–16; that stretch reads GSGKGT. The segment at 31-64 is NMP; sequence SAGEILKHALSVTKFHFNFNTDNMLNQINSGNLV. Residues 62–64, 90–93, and Gln97 each bind AMP; these read NLV and GFPR. Residues 127–164 form an LID region; the sequence is GRQVHIKSGRTYHIKFNPPKLDGIDDITGEKLVIRADD. Residues Arg128 and 137-138 each bind ATP; that span reads TY. AMP contacts are provided by Arg161 and Arg172. Residue Gln205 coordinates ATP.

This sequence belongs to the adenylate kinase family. In terms of assembly, monomer.

Its subcellular location is the cytoplasm. It carries out the reaction AMP + ATP = 2 ADP. Its pathway is purine metabolism; AMP biosynthesis via salvage pathway; AMP from ADP: step 1/1. Its function is as follows. Catalyzes the reversible transfer of the terminal phosphate group between ATP and AMP. Plays an important role in cellular energy homeostasis and in adenine nucleotide metabolism. The chain is Adenylate kinase from Blochmanniella floridana.